Here is an 875-residue protein sequence, read N- to C-terminus: E3 SUMO-protein ligase SIZ1 (875 aa).

An SAP domain is found at 12–46 (LAYFRIKELKDILNQLGLPKQGKKQDLIDRVLALL). The segment at 114–169 (KVRCICSSTMVNDSMIQCEDQRCQVWQHLNCVLIPDKPGESAEVPPVFYCELCRLS) adopts a PHD-type zinc-finger fold. The SP-RING-type zinc finger occupies 349-430 (SDLEVVAESV…FNRITSLLRN (82 aa)). Cysteine 380, histidine 382, cysteine 403, and cysteine 406 together coordinate Zn(2+). The interval 796-820 (GGGGNEEPAPADVNSQPQIPSTETG) is disordered. Residues 808–819 (VNSQPQIPSTET) show a composition bias toward polar residues.

Belongs to the PIAS family.

It localises to the nucleus. It functions in the pathway protein modification; protein sumoylation. Functionally, probable SUMO E3 ligase that may regulate Pi starvation responses. This chain is E3 SUMO-protein ligase SIZ1 (SIZ1), found in Oryza sativa subsp. japonica (Rice).